The chain runs to 882 residues: Leucine--tRNA ligase (882 aa).

The 'HIGH' region motif lies at Pro43–His53. The 'KMSKS' region signature appears at Lys634–Ser638. ATP is bound at residue Lys637.

The protein belongs to the class-I aminoacyl-tRNA synthetase family.

It localises to the cytoplasm. It carries out the reaction tRNA(Leu) + L-leucine + ATP = L-leucyl-tRNA(Leu) + AMP + diphosphate. The polypeptide is Leucine--tRNA ligase (Rhodopseudomonas palustris (strain BisB18)).